A 321-amino-acid chain; its full sequence is Phospho-N-acetylmuramoyl-pentapeptide-transferase (321 aa).

Transmembrane regions (helical) follow at residues 6 to 26 (ALIP…LFIG), 50 to 70 (GTPT…GIWV), 82 to 102 (LFIL…DDFI), 118 to 138 (LLGQ…EGYP), 143 to 163 (FFGI…FWLV), 175 to 195 (IDGL…IIAW), 200 to 220 (YDVL…FAYN), 226 to 246 (IFMG…ISIM), 251 to 271 (WTLL…MLQV), and 301 to 321 (IDII…WFIW).

It belongs to the glycosyltransferase 4 family. MraY subfamily. It depends on Mg(2+) as a cofactor.

Its subcellular location is the cell membrane. It catalyses the reaction UDP-N-acetyl-alpha-D-muramoyl-L-alanyl-gamma-D-glutamyl-L-lysyl-D-alanyl-D-alanine + di-trans,octa-cis-undecaprenyl phosphate = Mur2Ac(oyl-L-Ala-gamma-D-Glu-L-Lys-D-Ala-D-Ala)-di-trans,octa-cis-undecaprenyl diphosphate + UMP. The protein operates within cell wall biogenesis; peptidoglycan biosynthesis. Functionally, catalyzes the initial step of the lipid cycle reactions in the biosynthesis of the cell wall peptidoglycan: transfers peptidoglycan precursor phospho-MurNAc-pentapeptide from UDP-MurNAc-pentapeptide onto the lipid carrier undecaprenyl phosphate, yielding undecaprenyl-pyrophosphoryl-MurNAc-pentapeptide, known as lipid I. In Enterococcus hirae, this protein is Phospho-N-acetylmuramoyl-pentapeptide-transferase.